Here is an 88-residue protein sequence, read N- to C-terminus: Elongation factor 1-beta (88 aa).

The protein belongs to the EF-1-beta/EF-1-delta family.

Functionally, promotes the exchange of GDP for GTP in EF-1-alpha/GDP, thus allowing the regeneration of EF-1-alpha/GTP that could then be used to form the ternary complex EF-1-alpha/GTP/AAtRNA. The protein is Elongation factor 1-beta of Methanosphaera stadtmanae (strain ATCC 43021 / DSM 3091 / JCM 11832 / MCB-3).